The chain runs to 126 residues: S-adenosylmethionine decarboxylase proenzyme (126 aa).

Ser63 (schiff-base intermediate with substrate; via pyruvic acid) is an active-site residue. Pyruvic acid (Ser); by autocatalysis is present on Ser63. Residue His68 is the Proton acceptor; for processing activity of the active site. The active-site Proton donor; for catalytic activity is the Cys83.

This sequence belongs to the prokaryotic AdoMetDC family. Type 1 subfamily. In terms of assembly, heterotetramer of two alpha and two beta chains arranged as a dimer of alpha/beta heterodimers. Pyruvate is required as a cofactor. Is synthesized initially as an inactive proenzyme. Formation of the active enzyme involves a self-maturation process in which the active site pyruvoyl group is generated from an internal serine residue via an autocatalytic post-translational modification. Two non-identical subunits are generated from the proenzyme in this reaction, and the pyruvate is formed at the N-terminus of the alpha chain, which is derived from the carboxyl end of the proenzyme. The post-translation cleavage follows an unusual pathway, termed non-hydrolytic serinolysis, in which the side chain hydroxyl group of the serine supplies its oxygen atom to form the C-terminus of the beta chain, while the remainder of the serine residue undergoes an oxidative deamination to produce ammonia and the pyruvoyl group blocking the N-terminus of the alpha chain.

The catalysed reaction is S-adenosyl-L-methionine + H(+) = S-adenosyl 3-(methylsulfanyl)propylamine + CO2. Its pathway is amine and polyamine biosynthesis; S-adenosylmethioninamine biosynthesis; S-adenosylmethioninamine from S-adenosyl-L-methionine: step 1/1. Functionally, catalyzes the decarboxylation of S-adenosylmethionine to S-adenosylmethioninamine (dcAdoMet), the propylamine donor required for the synthesis of the polyamines spermine and spermidine from the diamine putrescine. This Bacillus velezensis (strain DSM 23117 / BGSC 10A6 / LMG 26770 / FZB42) (Bacillus amyloliquefaciens subsp. plantarum) protein is S-adenosylmethionine decarboxylase proenzyme.